The following is a 348-amino-acid chain: Dihydroorotase (348 aa).

His17 and His19 together coordinate Zn(2+). Residues 19-21 and Asn45 each bind substrate; that span reads HLR. Residues Lys103, His140, and His178 each contribute to the Zn(2+) site. An N6-carboxylysine modification is found at Lys103. His140 lines the substrate pocket. Leu223 serves as a coordination point for substrate. Zn(2+) is bound at residue Asp251. The active site involves Asp251. 2 residues coordinate substrate: His255 and Ala267.

Belongs to the metallo-dependent hydrolases superfamily. DHOase family. Class II DHOase subfamily. In terms of assembly, homodimer. Zn(2+) is required as a cofactor.

It catalyses the reaction (S)-dihydroorotate + H2O = N-carbamoyl-L-aspartate + H(+). The protein operates within pyrimidine metabolism; UMP biosynthesis via de novo pathway; (S)-dihydroorotate from bicarbonate: step 3/3. Its function is as follows. Catalyzes the reversible cyclization of carbamoyl aspartate to dihydroorotate. The sequence is that of Dihydroorotase from Shigella flexneri.